A 224-amino-acid chain; its full sequence is uncharacterized protein (224 aa).

The first 19 residues, 1-19 (MLRHITFTVFITTSMNTLA), serve as a signal peptide directing secretion.

This sequence belongs to the periplasmic pilus chaperone family.

The protein localises to the periplasm. Functionally, could be required for the biogenesis of a putative fimbria. This is an uncharacterized protein from Escherichia coli (strain K12).